The following is a 252-amino-acid chain: tRNA (guanine-N(7)-)-methyltransferase (252 aa).

Glutamate 80, glutamate 105, aspartate 132, and aspartate 155 together coordinate S-adenosyl-L-methionine. Aspartate 155 is an active-site residue. Substrate-binding positions include lysine 159, aspartate 191, and 231 to 234 (TKFE).

This sequence belongs to the class I-like SAM-binding methyltransferase superfamily. TrmB family.

The catalysed reaction is guanosine(46) in tRNA + S-adenosyl-L-methionine = N(7)-methylguanosine(46) in tRNA + S-adenosyl-L-homocysteine. Its pathway is tRNA modification; N(7)-methylguanine-tRNA biosynthesis. In terms of biological role, catalyzes the formation of N(7)-methylguanine at position 46 (m7G46) in tRNA. In Actinobacillus succinogenes (strain ATCC 55618 / DSM 22257 / CCUG 43843 / 130Z), this protein is tRNA (guanine-N(7)-)-methyltransferase.